A 435-amino-acid chain; its full sequence is Nuclear receptor subfamily 6 group A member 1 (435 aa).

A DNA-binding region (nuclear receptor) is located at residues 11 to 86 (QRACLICGDR…MGMNRKAIRE (76 aa)). NR C4-type zinc fingers lie at residues 14 to 34 (CLICGDRATGLHYGIISCEGC) and 50 to 69 (CSRDKNCVMSRKQRNRCQYC). Residues 84–157 (IREDGMPGGR…VSTPSSSRSM (74 aa)) are disordered. The span at 121–141 (NTSWSNNGDSDHSSPGNGVSE) shows a compositional bias: polar residues. Over residues 142–156 (SNQPSPVSTPSSSRS) the composition is skewed to low complexity. An NR LBD domain is found at 204 to 435 (QSHTLINQLL…HSCKTSLTKE (232 aa)).

This sequence belongs to the nuclear hormone receptor family. NR6 subfamily. As to quaternary structure, homodimer.

The protein resides in the cytoplasm. Its subcellular location is the nucleus. In terms of biological role, probable orphan nuclear receptor. Binds to a response element containing repeats of the motif 5'-AGGTCA-3'. Required for anterior-posterior patterning during organogenesis. Acts with chordin to play a role in patterning the midbrain-hindbrain. Isoform Em is required for integrin-mediated cell matrix interaction during neurulation and for the morphogenetic movements leading to formation of the neural tube. Also mediates the effect of retinoic acid on primary neurogenesis. The chain is Nuclear receptor subfamily 6 group A member 1 from Xenopus tropicalis (Western clawed frog).